Consider the following 211-residue polypeptide: Uracil phosphoribosyltransferase (211 aa).

Residues Arg-79, Arg-104, and Asp-131 to Ser-139 each bind 5-phospho-alpha-D-ribose 1-diphosphate. Residues Ile-196 and Gly-201 to Ala-203 each bind uracil. Asp-202 is a 5-phospho-alpha-D-ribose 1-diphosphate binding site.

This sequence belongs to the UPRTase family. Mg(2+) is required as a cofactor.

The catalysed reaction is UMP + diphosphate = 5-phospho-alpha-D-ribose 1-diphosphate + uracil. The protein operates within pyrimidine metabolism; UMP biosynthesis via salvage pathway; UMP from uracil: step 1/1. Allosterically activated by GTP. In terms of biological role, catalyzes the conversion of uracil and 5-phospho-alpha-D-ribose 1-diphosphate (PRPP) to UMP and diphosphate. The sequence is that of Uracil phosphoribosyltransferase from Lactococcus lactis subsp. lactis (strain IL1403) (Streptococcus lactis).